The primary structure comprises 158 residues: Transcription elongation factor GreA (158 aa).

The stretch at 1 to 67 (MSNNIPLTKE…FIEGRIQELQ (67 aa)) forms a coiled coil.

This sequence belongs to the GreA/GreB family.

Functionally, necessary for efficient RNA polymerase transcription elongation past template-encoded arresting sites. The arresting sites in DNA have the property of trapping a certain fraction of elongating RNA polymerases that pass through, resulting in locked ternary complexes. Cleavage of the nascent transcript by cleavage factors such as GreA or GreB allows the resumption of elongation from the new 3'terminus. GreA releases sequences of 2 to 3 nucleotides. The protein is Transcription elongation factor GreA of Trichlorobacter lovleyi (strain ATCC BAA-1151 / DSM 17278 / SZ) (Geobacter lovleyi).